The chain runs to 62 residues: Large ribosomal subunit protein eL37 (62 aa).

Zn(2+) is bound by residues Cys20, Cys23, Cys35, and Cys38. The C4-type zinc finger occupies Cys20–Cys38.

It belongs to the eukaryotic ribosomal protein eL37 family. Requires Zn(2+) as cofactor.

Its function is as follows. Binds to the 23S rRNA. This chain is Large ribosomal subunit protein eL37, found in Desulfurococcus amylolyticus (strain DSM 18924 / JCM 16383 / VKM B-2413 / 1221n) (Desulfurococcus kamchatkensis).